We begin with the raw amino-acid sequence, 570 residues long: AT-rich interactive domain-containing protein 3A (570 aa).

A disordered region spans residues 102 to 215 (AGVPNSSSGH…LAPQAQSQHH (114 aa)). The segment covering 120–160 (DIDDEDDEDDDPELDRGMDDEERDMDEDDSMNEGGGDEDLE) has biased composition (acidic residues). Serine 179 is modified (phosphoserine). Residues 232-324 (DEKRKEFLDD…YLYPYECEKR (93 aa)) enclose the ARID domain. Serine 356 carries the phosphoserine modification. Residues 429–523 (AALEQLREKL…GVLFARKPAI (95 aa)) form the REKLES domain. Positions 430-473 (ALEQLREKLESGEPPEKKVMLMAEEQQRIMQHALQQNLFAMATQ) are important for nuclear localization. A homodimerization region spans residues 475–495 (PMNIKLNNRDDRQETALNLST). Positions 519–531 (RKPAIGFMPSSQR) are important for cytoplasmic localization. Positions 528–570 (SSQRVHHQHSSQGKSNSPGLSSHIQPSSSASSSASSHGPATSP) are disordered. Residues serine 542 and serine 569 each carry the phosphoserine modification. Residues 548-570 (SSHIQPSSSASSSASSHGPATSP) are compositionally biased toward low complexity.

Homodimer.

It is found in the nucleus. Its subcellular location is the cytoplasm. Functionally, transcription factor. This is AT-rich interactive domain-containing protein 3A (arid3a) from Danio rerio (Zebrafish).